We begin with the raw amino-acid sequence, 174 residues long: MALDNLKEGLPEYAKDLKLNLGTLSRSTELSEQQLWGTFLATAAATRNDTIISEIAEEASQHLSDEYVNAAYGAASIMAMNNVAYRAKSFLGSDYAQVRMGLRMNIINKSGIDKVDFELMALAVSTINGCHDCTKAHEKTVTSEGLTKEQVFEAVKIAATIQGVAQAIQIEAAR.

Residue cysteine 130 is the Proton donor of the active site. An intrachain disulfide couples cysteine 130 to cysteine 133. Cysteine 133 (cysteine sulfenic acid (-SOH) intermediate) is an active-site residue.

The protein belongs to the AhpD family. Homotrimer.

It catalyses the reaction N(6)-[(R)-dihydrolipoyl]-L-lysyl-[lipoyl-carrier protein] + a hydroperoxide = N(6)-[(R)-lipoyl]-L-lysyl-[lipoyl-carrier protein] + an alcohol + H2O. Antioxidant protein with alkyl hydroperoxidase activity. Required for the reduction of the AhpC active site cysteine residues and for the regeneration of the AhpC enzyme activity. In Corynebacterium kroppenstedtii (strain DSM 44385 / JCM 11950 / CIP 105744 / CCUG 35717), this protein is Alkyl hydroperoxide reductase AhpD.